The chain runs to 171 residues: Galectin-related protein (171 aa).

Residues 38–170 form the Galectin domain; that stretch reads PFCGHIKGGM…INGDLQLTKL (133 aa).

Its function is as follows. Does not bind lactose, and may not bind carbohydrates. This chain is Galectin-related protein (lgalsl), found in Xenopus tropicalis (Western clawed frog).